The following is a 705-amino-acid chain: Elongation factor G (705 aa).

A tr-type G domain is found at 8-290 (HRYRNIGIMA…GVIHLLPSPA (283 aa)). GTP contacts are provided by residues 17–24 (AHIDAGKT), 88–92 (DTPGH), and 142–145 (NKMD).

This sequence belongs to the TRAFAC class translation factor GTPase superfamily. Classic translation factor GTPase family. EF-G/EF-2 subfamily.

It is found in the cytoplasm. Catalyzes the GTP-dependent ribosomal translocation step during translation elongation. During this step, the ribosome changes from the pre-translocational (PRE) to the post-translocational (POST) state as the newly formed A-site-bound peptidyl-tRNA and P-site-bound deacylated tRNA move to the P and E sites, respectively. Catalyzes the coordinated movement of the two tRNA molecules, the mRNA and conformational changes in the ribosome. This Xylella fastidiosa (strain M23) protein is Elongation factor G.